The following is a 407-amino-acid chain: Resuscitation-promoting factor RpfA (407 aa).

Positions 1–33 (MSGRHRKPTTSNVSVAKIAFTGAVLGGGGIAMA) are cleaved as a signal peptide. Disordered stretches follow at residues 142-253 (VNGE…ADLA) and 271-371 (LPAA…AETP). The span at 148 to 159 (PLAPPPADPAPP) shows a compositional bias: pro residues. A compositionally biased stretch (low complexity) spans 160-170 (VELAANDLPAP). A compositionally biased stretch (pro residues) spans 171–193 (LGEPLPAAPADPAPPADLAPPAP). A run of 2 repeats spans residues 178–185 (APADPAPP) and 186–193 (ADLAPPAP). Residues 178–359 (APADPAPPAD…PDPQPADAPP (182 aa)) form a 12 X 8 AA approximate repeats of A-P-A-D-L-A-P-P region. Residues 194–210 (ADVAPPVELAVNDLPAP) are compositionally biased toward low complexity. The segment covering 211 to 249 (LGEPLPAAPADPAPPADLAPPAPADLAPPAPADLAPPAP) has biased composition (pro residues). A run of 10 repeats spans residues 218 to 225 (APADPAPP), 226 to 233 (ADLAPPAP), 240 to 247 (APADLAPP), 248 to 255 (APADLAPP), 274 to 281 (APAELAPP), 287 to 294 (ASADLAPP), 295 to 302 (APADLAPP), 303 to 310 (APAELAPP), 311 to 318 (APADLAPP), and 353 to 359 (QPADAPP). Positions 274 to 292 (APAELAPPADLAPASADLA) are enriched in low complexity. Pro residues-rich tracts occupy residues 293–312 (PPAP…PPAP) and 350–361 (PDPQPADAPPPG).

Belongs to the transglycosylase family. Rpf subfamily.

Its function is as follows. Factor that stimulates resuscitation of dormant cells. Has peptidoglycan (PG) hydrolytic activity. This chain is Resuscitation-promoting factor RpfA (rpfA), found in Mycobacterium tuberculosis (strain CDC 1551 / Oshkosh).